The sequence spans 167 residues: Large ribosomal subunit protein uL10 (167 aa).

This sequence belongs to the universal ribosomal protein uL10 family. Part of the ribosomal stalk of the 50S ribosomal subunit. The N-terminus interacts with L11 and the large rRNA to form the base of the stalk. The C-terminus forms an elongated spine to which L12 dimers bind in a sequential fashion forming a multimeric L10(L12)X complex.

Forms part of the ribosomal stalk, playing a central role in the interaction of the ribosome with GTP-bound translation factors. In Streptococcus thermophilus (strain CNRZ 1066), this protein is Large ribosomal subunit protein uL10.